We begin with the raw amino-acid sequence, 128 residues long: Elongation factor G (128 aa).

Belongs to the GTP-binding elongation factor family. EF-G/EF-2 subfamily.

The protein resides in the cytoplasm. Catalyzes the GTP-dependent ribosomal translocation step during translation elongation. During this step, the ribosome changes from the pre-translocational (PRE) to the post-translocational (POST) state as the newly formed A-site-bound peptidyl-tRNA and P-site-bound deacylated tRNA move to the P and E sites, respectively. Catalyzes the coordinated movement of the two tRNA molecules, the mRNA and conformational changes in the ribosome. This chain is Elongation factor G (fusA), found in Planobispora rosea.